Consider the following 435-residue polypeptide: Glutamate-1-semialdehyde 2,1-aminomutase (435 aa).

The residue at position 266 (Lys-266) is an N6-(pyridoxal phosphate)lysine.

Belongs to the class-III pyridoxal-phosphate-dependent aminotransferase family. HemL subfamily. Homodimer. Pyridoxal 5'-phosphate serves as cofactor.

It localises to the cytoplasm. The enzyme catalyses (S)-4-amino-5-oxopentanoate = 5-aminolevulinate. The protein operates within porphyrin-containing compound metabolism; protoporphyrin-IX biosynthesis; 5-aminolevulinate from L-glutamyl-tRNA(Glu): step 2/2. The chain is Glutamate-1-semialdehyde 2,1-aminomutase from Coxiella burnetii (strain Dugway 5J108-111).